Reading from the N-terminus, the 107-residue chain is L-rhamnose mutarotase (107 aa).

Y18 serves as a coordination point for substrate. H22 functions as the Proton donor in the catalytic mechanism. Substrate-binding positions include Y41 and 76-77 (WW).

This sequence belongs to the rhamnose mutarotase family. As to quaternary structure, homodimer.

It localises to the cytoplasm. It carries out the reaction alpha-L-rhamnose = beta-L-rhamnose. It functions in the pathway carbohydrate metabolism; L-rhamnose metabolism. Involved in the anomeric conversion of L-rhamnose. The polypeptide is L-rhamnose mutarotase (Paraburkholderia xenovorans (strain LB400)).